The primary structure comprises 276 residues: Large ribosomal subunit protein uL2 (276 aa).

Residues 208–276 are disordered; it reads KAGRNRHRGI…KLIISRRKGK (69 aa). Basic and acidic residues predominate over residues 230–240; that stretch reads DHPHGGGEGKK. The span at 255-276 shows a compositional bias: basic residues; it reads KGAKTRRKKASDKLIISRRKGK.

The protein belongs to the universal ribosomal protein uL2 family. In terms of assembly, part of the 50S ribosomal subunit. Forms a bridge to the 30S subunit in the 70S ribosome.

Its function is as follows. One of the primary rRNA binding proteins. Required for association of the 30S and 50S subunits to form the 70S ribosome, for tRNA binding and peptide bond formation. It has been suggested to have peptidyltransferase activity; this is somewhat controversial. Makes several contacts with the 16S rRNA in the 70S ribosome. The sequence is that of Large ribosomal subunit protein uL2 from Campylobacter lari (strain RM2100 / D67 / ATCC BAA-1060).